The following is a 289-amino-acid chain: Proteasome subunit beta (289 aa).

The propeptide at 1-55 is removed in mature form; by autocatalysis; it reads MTWPLPDRLSINSAISGSAVDLSSFAEFLRRQAPELLPASIKHGGGAVGDQLPHA. Threonine 56 acts as the Nucleophile in catalysis.

Belongs to the peptidase T1B family. In terms of assembly, the 20S proteasome core is composed of 14 alpha and 14 beta subunits that assemble into four stacked heptameric rings, resulting in a barrel-shaped structure. The two inner rings, each composed of seven catalytic beta subunits, are sandwiched by two outer rings, each composed of seven alpha subunits. The catalytic chamber with the active sites is on the inside of the barrel. Has a gated structure, the ends of the cylinder being occluded by the N-termini of the alpha-subunits. Is capped by the proteasome-associated ATPase, ARC.

It is found in the cytoplasm. The enzyme catalyses Cleavage of peptide bonds with very broad specificity.. Its pathway is protein degradation; proteasomal Pup-dependent pathway. Its activity is regulated as follows. The formation of the proteasomal ATPase ARC-20S proteasome complex, likely via the docking of the C-termini of ARC into the intersubunit pockets in the alpha-rings, may trigger opening of the gate for substrate entry. Interconversion between the open-gate and close-gate conformations leads to a dynamic regulation of the 20S proteasome proteolysis activity. Its function is as follows. Component of the proteasome core, a large protease complex with broad specificity involved in protein degradation. This Mycobacterium marinum (strain ATCC BAA-535 / M) protein is Proteasome subunit beta.